The sequence spans 237 residues: MTNELVYEGKAKRLFKTEEAGVLRVAYKDDATALNGVRKESFAGKGELNNQITSLIFSHLAEAGIESHFIRAISETEQLVKEVSIIPLEVVVRNVMAGSLAKRLGKEEGEPIPNAIVEFYFKEDALDDPFINDDHVLYLEIATTNEMDEIRQAARSINKVLQELFTQMNITLIDFKLEFGRDAAGNILLADEISPDTCRLWDKETNQKLDKDVFRRNIGNLTDVYTEVLNRLKQVQN.

The protein belongs to the SAICAR synthetase family.

It carries out the reaction 5-amino-1-(5-phospho-D-ribosyl)imidazole-4-carboxylate + L-aspartate + ATP = (2S)-2-[5-amino-1-(5-phospho-beta-D-ribosyl)imidazole-4-carboxamido]succinate + ADP + phosphate + 2 H(+). It functions in the pathway purine metabolism; IMP biosynthesis via de novo pathway; 5-amino-1-(5-phospho-D-ribosyl)imidazole-4-carboxamide from 5-amino-1-(5-phospho-D-ribosyl)imidazole-4-carboxylate: step 1/2. The sequence is that of Phosphoribosylaminoimidazole-succinocarboxamide synthase from Listeria monocytogenes serotype 4a (strain HCC23).